We begin with the raw amino-acid sequence, 468 residues long: Zinc finger protein 672 (468 aa).

4 consecutive C2H2-type zinc fingers follow at residues 15–37 (YSCSVCGKSFQYSAVLLRHERAH), 43–65 (FCCLECGERCARAADLRAHRWTH), 71–93 (YICSECGQSFSHSGLLDLHLGTH), and 100–123 (RPCRLCGRRFPHVPALLLHRARQH). Residues 129–151 (HRCPLCARSFRQSALPFHLARAH) form a C2H2-type 5; degenerate zinc finger. C2H2-type zinc fingers lie at residues 167 to 189 (YHCTQCPRAFHSSAGLRNHSRIH), 202 to 224 (HLCGICGKSFSKSSTLTRHLQRH), 230 to 252 (FKCPECGKGFLESATLVRHQRTH), 258 to 280 (YACSDCGRCFSESSTLLRHQRSH), 286 to 308 (HVCATCGKGFGQRYDLVVHQRSH), 314 to 336 (FPCPQCGRGFTDRSDLTKHLRTH), 342 to 364 (YHCELCGKRFTCISNLNVHLRNH), 370 to 392 (HKCPECGKSFSVASKLALHRKTH), and 398 to 420 (AECTECGKFFSHGRSLSQHQRSH).

This sequence belongs to the krueppel C2H2-type zinc-finger protein family.

The protein localises to the nucleus. May be involved in transcriptional regulation. The chain is Zinc finger protein 672 (Znf672) from Mus musculus (Mouse).